The sequence spans 607 residues: UvrABC system protein C (607 aa).

The GIY-YIG domain occupies 15-93 (SEPGVYCMLD…IKKYQPRYNI (79 aa)). The 36-residue stretch at 202–237 (HEVIADLIKKMEAASQQLNFELAAKVRDQIMLLRKM) folds into the UVR domain.

Belongs to the UvrC family. Interacts with UvrB in an incision complex.

It localises to the cytoplasm. The UvrABC repair system catalyzes the recognition and processing of DNA lesions. UvrC both incises the 5' and 3' sides of the lesion. The N-terminal half is responsible for the 3' incision and the C-terminal half is responsible for the 5' incision. The protein is UvrABC system protein C of Pseudoalteromonas translucida (strain TAC 125).